Consider the following 168-residue polypeptide: ATP synthase subunit b (168 aa).

The chain crosses the membrane as a helical span at residues 9–29 (LFNLSTFVFTIINLLVLYYIL).

The protein belongs to the ATPase B chain family. F-type ATPases have 2 components, F(1) - the catalytic core - and F(0) - the membrane proton channel. F(1) has five subunits: alpha(3), beta(3), gamma(1), delta(1), epsilon(1). F(0) has three main subunits: a(1), b(2) and c(10-14). The alpha and beta chains form an alternating ring which encloses part of the gamma chain. F(1) is attached to F(0) by a central stalk formed by the gamma and epsilon chains, while a peripheral stalk is formed by the delta and b chains.

The protein resides in the cell membrane. Functionally, f(1)F(0) ATP synthase produces ATP from ADP in the presence of a proton or sodium gradient. F-type ATPases consist of two structural domains, F(1) containing the extramembraneous catalytic core and F(0) containing the membrane proton channel, linked together by a central stalk and a peripheral stalk. During catalysis, ATP synthesis in the catalytic domain of F(1) is coupled via a rotary mechanism of the central stalk subunits to proton translocation. In terms of biological role, component of the F(0) channel, it forms part of the peripheral stalk, linking F(1) to F(0). The polypeptide is ATP synthase subunit b (Caldanaerobacter subterraneus subsp. tengcongensis (strain DSM 15242 / JCM 11007 / NBRC 100824 / MB4) (Thermoanaerobacter tengcongensis)).